A 273-amino-acid polypeptide reads, in one-letter code: Probable cysteine-rich repeat secretory protein 6 (273 aa).

The signal sequence occupies residues 1–21 (MTRIIDVSLFCFFLFSLGAMS). Gnk2-homologous domains are found at residues 22–122 (QPSQ…DNSF) and 128–241 (DSPA…ISAL).

It belongs to the cysteine-rich repeat secretory protein family.

It localises to the secreted. This Arabidopsis thaliana (Mouse-ear cress) protein is Probable cysteine-rich repeat secretory protein 6 (CRRSP6).